The primary structure comprises 415 residues: Multifunctional CCA protein (415 aa).

Residues Gly8 and Arg11 each coordinate ATP. CTP is bound by residues Gly8 and Arg11. 2 residues coordinate Mg(2+): Asp21 and Asp23. ATP contacts are provided by Arg91, Arg143, and Arg146. CTP is bound by residues Arg91, Arg143, and Arg146. One can recognise an HD domain in the interval 232–333 (TGVHVMMVID…VRLLERCDAL (102 aa)).

This sequence belongs to the tRNA nucleotidyltransferase/poly(A) polymerase family. Bacterial CCA-adding enzyme type 1 subfamily. As to quaternary structure, monomer. Can also form homodimers and oligomers. Mg(2+) serves as cofactor. The cofactor is Ni(2+).

It catalyses the reaction a tRNA precursor + 2 CTP + ATP = a tRNA with a 3' CCA end + 3 diphosphate. The catalysed reaction is a tRNA with a 3' CCA end + 2 CTP + ATP = a tRNA with a 3' CCACCA end + 3 diphosphate. Catalyzes the addition and repair of the essential 3'-terminal CCA sequence in tRNAs without using a nucleic acid template. Adds these three nucleotides in the order of C, C, and A to the tRNA nucleotide-73, using CTP and ATP as substrates and producing inorganic pyrophosphate. tRNA 3'-terminal CCA addition is required both for tRNA processing and repair. Also involved in tRNA surveillance by mediating tandem CCA addition to generate a CCACCA at the 3' terminus of unstable tRNAs. While stable tRNAs receive only 3'-terminal CCA, unstable tRNAs are marked with CCACCA and rapidly degraded. The chain is Multifunctional CCA protein from Cupriavidus taiwanensis (strain DSM 17343 / BCRC 17206 / CCUG 44338 / CIP 107171 / LMG 19424 / R1) (Ralstonia taiwanensis (strain LMG 19424)).